A 297-amino-acid chain; its full sequence is tRNA-cytidine(32) 2-sulfurtransferase (297 aa).

Positions 45 to 50 (SGGKDS) match the PP-loop motif motif. Positions 120, 123, and 211 each coordinate [4Fe-4S] cluster.

The protein belongs to the TtcA family. As to quaternary structure, homodimer. The cofactor is Mg(2+). [4Fe-4S] cluster is required as a cofactor.

The protein resides in the cytoplasm. It carries out the reaction cytidine(32) in tRNA + S-sulfanyl-L-cysteinyl-[cysteine desulfurase] + AH2 + ATP = 2-thiocytidine(32) in tRNA + L-cysteinyl-[cysteine desulfurase] + A + AMP + diphosphate + H(+). The protein operates within tRNA modification. Its function is as follows. Catalyzes the ATP-dependent 2-thiolation of cytidine in position 32 of tRNA, to form 2-thiocytidine (s(2)C32). The sulfur atoms are provided by the cysteine/cysteine desulfurase (IscS) system. This Vibrio parahaemolyticus serotype O3:K6 (strain RIMD 2210633) protein is tRNA-cytidine(32) 2-sulfurtransferase.